The primary structure comprises 400 residues: MAQENLQKIVDSLESSRAEREELYKWFHQHPEMSMQEHETSKRIAEELEKLGLEPQNIGVTGQVAVIKNGEGPSVAFRADFDALPITENTGLDYSADPELGMMHACGHDLHTTALLGAVRALVENKDLWSGTFIAVHQPGEEGGGGARHMVDDGLAEKIAAPDVCFAQHVFNEDPAFGYVFTPGRFLTAASNWRIHIHGEGGHGSRPHLTKDPIVVAASIITKLQTIVSREVDPNEVAVVTVGSIEGGKSTNSIPYTVTLGVNTRASNDELSEYVQNAIKRIVIAECQAAGIEQEPEFEYLDSVPAVINDEDLTEQLMAQFREFFGEDQAVEIPPLSGSEDYPFIPNAWGVPSVMWGWSGFAAGSDAPGNHTDKFAPELPDALERGTQAILVAAAPWLMK.

The protein belongs to the peptidase M20 family. The cofactor is Zn(2+).

The enzyme catalyses an N(2)-acyl-L-glutamine + H2O = a carboxylate + L-glutamine. It catalyses the reaction N(2)-[(2E)-3-methylhex-2-enoyl]-L-glutaminate + H2O = (2E)-3-methylhex-2-enoate + L-glutamine. The catalysed reaction is N(2)-(3-hydroxy-3-methylhexanoyl)-L-glutaminate + H2O = 3-hydroxy-3-methylhexanoate + L-glutamine. Its activity is regulated as follows. Partial loss of activity with the combination Mn(2+) and chelating agents. Activity is lost in presence of 0.5 mM dithiothreitol. In terms of biological role, hydrolyzes odorless N-alpha-acyl-L-glutamine conjugates of short- and medium-chain fatty acids, releasing human axillary malodor compounds. The enzyme is highly specific for the glutamine residue but has a low specificity for the acyl part of the substrate. The two most common products are 3-methyl-2-hexenoic acid (3M2H) and 3-hydroxy-3-methyl-hexanoic acid (HMHA), which are produced from the odorless precursors N-alpha-3-methyl-2-hexenoyl-L-glutamine (3M2H-Gln) and N-alpha-3-hydroxy-3-methylhexanoyl-L-glutamine (HMHA-Gln). In addition, over 28 different carboxylic acids contributing to human body odor are released by this enzyme from odorless axilla secretions, including several aliphatic 3-hydroxy acids with 4-Me branches, 3,4-unsaturated, 4-Et-branched aliphatic acids, and a variety of degradation products of amino acids. The protein is N(alpha)-acyl-glutamine aminoacylase of Corynebacterium striatum.